The chain runs to 901 residues: Probable dipeptidyl-aminopeptidase B (901 aa).

Positions 1 to 22 are enriched in low complexity; it reads MSSPRPSTSSTSSDSGLSVDTT. The interval 1 to 67 is disordered; the sequence is MSSPRPSTSS…EPFLPSAKKQ (67 aa). The Cytoplasmic portion of the chain corresponds to 1–76; that stretch reads MSSPRPSTSS…QAASGSRTSR (76 aa). The helical; Signal-anchor for type II membrane protein transmembrane segment at 77-97 threads the bilayer; the sequence is LIWGLVILCVAGWLWGLVLFV. The Vacuolar segment spans residues 98-901; that stretch reads TQNRSAQQSV…VKRSLPMLVK (804 aa). N-linked (GlcNAc...) asparagine glycans are attached at residues Asn334 and Asn625. Ser739 (charge relay system) is an active-site residue. Asn793 is a glycosylation site (N-linked (GlcNAc...) asparagine). Catalysis depends on charge relay system residues Asp816 and His849.

The protein belongs to the peptidase S9B family.

The protein resides in the vacuole membrane. The enzyme catalyses Release of an N-terminal dipeptide, Xaa-Yaa-|-Zaa-, from a polypeptide, preferentially when Yaa is Pro, provided Zaa is neither Pro nor hydroxyproline.. Functionally, type IV dipeptidyl-peptidase which removes N-terminal dipeptides sequentially from polypeptides having unsubstituted N-termini provided that the penultimate residue is proline. This is Probable dipeptidyl-aminopeptidase B (dapB) from Aspergillus niger (strain ATCC MYA-4892 / CBS 513.88 / FGSC A1513).